The primary structure comprises 446 residues: MLTYKISPSSISGSVDVPPSKSHTLRAIFWASLSRGTSTINNPLESPDSEAMIQACKQLGAKIYKKSSSLEITGTPHLRLPKDIAIDAGSSGIVFRFFTALAAIFSEKVTITGSSQLQRRPIAPLIRALENFGATFSYQRDPYTLPFSVLGPISSGYTEVLGEDSQYASALAMACSLAEGPFSFTIINPKERPWFKLTLWWLEQLAIPYSQSEENTYSFVGKSRPEGFSYTVGGDFSSAAFLAVAALLSQSPHPTYLRNLNMQDVQGDKELFVLLKKLGANIVFENDIVIIFPSTISGGNIDMDPFIDALPILAVLCCFATSPSHLYNARGAKDKESDRIVAITEELQKMGACIQPCHDGLLINPSPLYGASMFSHNDHRIAMALSIAAMHASGDSSISDTECVKKTFPNFIQILNSLHANIQEYHEPISMWTTGSGQDLIGSCPC.

3-phosphoshikimate contacts are provided by lysine 21, serine 22, and arginine 26. Residue lysine 21 participates in phosphoenolpyruvate binding. Glycine 92 and arginine 120 together coordinate phosphoenolpyruvate. Residues serine 165, glutamine 166, aspartate 308, and lysine 335 each coordinate 3-phosphoshikimate. Glutamine 166 is a binding site for phosphoenolpyruvate. The Proton acceptor role is filled by aspartate 308. Positions 339, 380, and 406 each coordinate phosphoenolpyruvate.

This sequence belongs to the EPSP synthase family. Monomer.

The protein resides in the cytoplasm. The catalysed reaction is 3-phosphoshikimate + phosphoenolpyruvate = 5-O-(1-carboxyvinyl)-3-phosphoshikimate + phosphate. It participates in metabolic intermediate biosynthesis; chorismate biosynthesis; chorismate from D-erythrose 4-phosphate and phosphoenolpyruvate: step 6/7. Its function is as follows. Catalyzes the transfer of the enolpyruvyl moiety of phosphoenolpyruvate (PEP) to the 5-hydroxyl of shikimate-3-phosphate (S3P) to produce enolpyruvyl shikimate-3-phosphate and inorganic phosphate. The sequence is that of 3-phosphoshikimate 1-carboxyvinyltransferase from Chlamydia caviae (strain ATCC VR-813 / DSM 19441 / 03DC25 / GPIC) (Chlamydophila caviae).